We begin with the raw amino-acid sequence, 133 residues long: Ribonuclease P protein component (133 aa).

This sequence belongs to the RnpA family. In terms of assembly, consists of a catalytic RNA component (M1 or rnpB) and a protein subunit.

It catalyses the reaction Endonucleolytic cleavage of RNA, removing 5'-extranucleotides from tRNA precursor.. RNaseP catalyzes the removal of the 5'-leader sequence from pre-tRNA to produce the mature 5'-terminus. It can also cleave other RNA substrates such as 4.5S RNA. The protein component plays an auxiliary but essential role in vivo by binding to the 5'-leader sequence and broadening the substrate specificity of the ribozyme. The protein is Ribonuclease P protein component of Pseudomonas fluorescens (strain Pf0-1).